A 382-amino-acid polypeptide reads, in one-letter code: Chaperone protein DnaJ (382 aa).

In terms of domain architecture, J spans 5-70 (DYYEVLGVSR…DKKAAYDRYG (66 aa)). The CR-type zinc-finger motif lies at 141-219 (GVQKTINVPA…CHGAGRVEKE (79 aa)). Zn(2+) is bound by residues Cys154, Cys157, Cys171, Cys174, Cys193, Cys196, Cys207, and Cys210. CXXCXGXG motif repeat units lie at residues 154–161 (CDACKGTG), 171–178 (CPTCSGMG), 193–200 (CPTCNGMG), and 207–214 (CKVCHGAG).

It belongs to the DnaJ family. Homodimer. Zn(2+) serves as cofactor.

The protein localises to the cytoplasm. Functionally, participates actively in the response to hyperosmotic and heat shock by preventing the aggregation of stress-denatured proteins and by disaggregating proteins, also in an autonomous, DnaK-independent fashion. Unfolded proteins bind initially to DnaJ; upon interaction with the DnaJ-bound protein, DnaK hydrolyzes its bound ATP, resulting in the formation of a stable complex. GrpE releases ADP from DnaK; ATP binding to DnaK triggers the release of the substrate protein, thus completing the reaction cycle. Several rounds of ATP-dependent interactions between DnaJ, DnaK and GrpE are required for fully efficient folding. Also involved, together with DnaK and GrpE, in the DNA replication of plasmids through activation of initiation proteins. This Cereibacter sphaeroides (strain ATCC 17029 / ATH 2.4.9) (Rhodobacter sphaeroides) protein is Chaperone protein DnaJ.